The following is a 105-amino-acid chain: Class II hydrophobin 1 (105 aa).

The N-terminal stretch at 1–15 (MQVLLIATLVASVLA) is a signal peptide. 4 disulfide bridges follow: Cys38/Cys87, Cys48/Cys78, Cys49/Cys58, and Cys88/Cys99.

The protein belongs to the cerato-ulmin hydrophobin family. Homotetramer. Further self-assembles to form highly ordered films at water-air interfaces through intermolecular interactions.

The protein localises to the secreted. The protein resides in the cell wall. In terms of biological role, aerial growth, conidiation, and dispersal of filamentous fungi in the environment rely upon a capability of their secreting small amphipathic proteins called hydrophobins (HPBs) with low sequence identity. Class I can self-assemble into an outermost layer of rodlet bundles on aerial cell surfaces, conferring cellular hydrophobicity that supports fungal growth, development and dispersal; whereas Class II form highly ordered films at water-air interfaces through intermolecular interactions but contribute nothing to the rodlet structure. HYD1 is a class II hydrophobin that plays roles in conidiation and cuticle-bypassing infection by regulating the transcripts of frequency clock protein frq, and velvet protein vosA, as well as primordium formation via the mitogen-activated protein kinase signaling pathway. Also participates in stress response, including tolerance of mycelia to osmotic and oxidative stresses, and conidia to high or low temperature. Acts as a defensive factor against Calcarisporium cordycipiticola infection, probably via the formation of a physical barrier to inhibit the pathogen infection owing to its hydrophobicity or binding to the effector of C.cordycipiticola, hindering the recognition of the pathogen. Finally, regulates the transcription of the AreA transcription factor at different developmental stages via a positive feedback loop. In Cordyceps militaris (Caterpillar fungus), this protein is Class II hydrophobin 1.